The sequence spans 921 residues: DNA ligase (921 aa).

Residues 90–94, 139–140, and glutamate 173 each bind NAD(+); these read DAAYD and SL. Catalysis depends on lysine 175, which acts as the N6-AMP-lysine intermediate. Residues arginine 196, glutamate 235, lysine 360, and lysine 384 each coordinate NAD(+). Cysteine 481, cysteine 484, cysteine 500, and cysteine 506 together coordinate Zn(2+). The tract at residues 663 to 688 is disordered; the sequence is EAAIESAETQGGAASETTGAPTGAEA. The region spanning 839 to 921 is the BRCT domain; it reads SLPQTLAGKT…AQLLETGSID (83 aa).

The protein belongs to the NAD-dependent DNA ligase family. LigA subfamily. Mg(2+) serves as cofactor. It depends on Mn(2+) as a cofactor.

It catalyses the reaction NAD(+) + (deoxyribonucleotide)n-3'-hydroxyl + 5'-phospho-(deoxyribonucleotide)m = (deoxyribonucleotide)n+m + AMP + beta-nicotinamide D-nucleotide.. DNA ligase that catalyzes the formation of phosphodiester linkages between 5'-phosphoryl and 3'-hydroxyl groups in double-stranded DNA using NAD as a coenzyme and as the energy source for the reaction. It is essential for DNA replication and repair of damaged DNA. This Bifidobacterium longum subsp. infantis (strain ATCC 15697 / DSM 20088 / JCM 1222 / NCTC 11817 / S12) protein is DNA ligase.